Reading from the N-terminus, the 363-residue chain is Protein RecA (363 aa).

66 to 73 provides a ligand contact to ATP; sequence GPESSGKT. The tract at residues 327–363 is disordered; sequence YGIDEKSIADRENPEKIKEKREETSEENKTDNSEKTK. The segment covering 329–363 has biased composition (basic and acidic residues); it reads IDEKSIADRENPEKIKEKREETSEENKTDNSEKTK.

The protein belongs to the RecA family.

Its subcellular location is the cytoplasm. Its function is as follows. Can catalyze the hydrolysis of ATP in the presence of single-stranded DNA, the ATP-dependent uptake of single-stranded DNA by duplex DNA, and the ATP-dependent hybridization of homologous single-stranded DNAs. It interacts with LexA causing its activation and leading to its autocatalytic cleavage. The polypeptide is Protein RecA (Lactobacillus acidophilus (strain ATCC 700396 / NCK56 / N2 / NCFM)).